The following is a 541-amino-acid chain: Eukaryotic translation initiation factor 3 subunit L (541 aa).

Residues 308–516 form the PCI domain; it reads TFSDILLYIQ…IHIADTKVSH (209 aa).

Belongs to the eIF-3 subunit L family. Component of the eukaryotic translation initiation factor 3 (eIF-3) complex. The eIF-3 complex interacts with pix.

The protein localises to the cytoplasm. Its function is as follows. Component of the eukaryotic translation initiation factor 3 (eIF-3) complex, which is involved in protein synthesis of a specialized repertoire of mRNAs and, together with other initiation factors, stimulates binding of mRNA and methionyl-tRNAi to the 40S ribosome. The eIF-3 complex specifically targets and initiates translation of a subset of mRNAs involved in cell proliferation. The sequence is that of Eukaryotic translation initiation factor 3 subunit L from Drosophila persimilis (Fruit fly).